The sequence spans 330 residues: Fructose-1,6-bisphosphatase class 1 (330 aa).

Mg(2+) contacts are provided by Glu84, Asp103, Leu105, and Asp106. Substrate contacts are provided by residues 106–109 (DGSS), Asn196, and Lys262. Glu268 is a binding site for Mg(2+).

This sequence belongs to the FBPase class 1 family. In terms of assembly, homotetramer. It depends on Mg(2+) as a cofactor.

It is found in the cytoplasm. The catalysed reaction is beta-D-fructose 1,6-bisphosphate + H2O = beta-D-fructose 6-phosphate + phosphate. The protein operates within carbohydrate biosynthesis; gluconeogenesis. In Shewanella sp. (strain W3-18-1), this protein is Fructose-1,6-bisphosphatase class 1.